A 1242-amino-acid chain; its full sequence is MDELQKLEYLSLVSKICTELDNHLGINDKDLAEFIIDLENKNRTYDTFRKALLDNGAEFPDSLVQNLQRIINLMRPSRPGGASQEKTVGDKKEDKKSQLLKMFPGLALPNDTYSKKEESDDDEKVKAKPEKHSETHKKTDMSDVDAAMMELEALAPGEGATLVRPHKEVSSRDRHKRRSRDRDTKRRSRSREDRHSDRRRSRSRDKERRRRSRSRDNRRRSRSREDRDRDRDRRHKSSSSRDHHERRRRSRSRSTERRDRRDRSRDCSEKMPPPSAAMTDDPEAGKIYSGKIANIVPFGCFVQLFGLRKRWEGLVHISQLRAEGRVTDVTEVVTRNQTVKVKVMSITGQKVSLSMKEVDQDSGKDLNPLSHAPEDDESLRDRNPDGPFSSSTSMLNLQGNGMEGDEHESRKRVTRISSPERWEIKQMISSGVLDRSEMPDFDEETGLLPKDEDDEADIEIEIVEEEPPFLSGHGRALHDLSPVRIVKNPDGSLAQAAMMQSALSKERREQKMLQREQEIEAMPTSLNKNWIDPLPEDESRSLAANMRGMAAAPPEVPEWKKHVIGGKKSSFGKKTDLTLVEQRQSLPIYKLRDDLIKAVTDNQILIVIGETGSGKTTQITQYLGECGFTARGKIGCTQPRRVAAMSVAKRVAEEYGCRLGQEVGYTIRFEDCTSPETIIKYMTDGMLLRECLMEAELKSYSVIMLDEAHERTIHTDVLFGLLKTAVQKRPELKLIVTSATLDAVKFSQYFFKAPIFTIPGRTFPVEVLYTKEPETDYLDASLITVMQIHLREPPGDILLFLTGQEEIDTACEILYERMKSLGPDVPELIILPVYSALPSEMQTRIFDPAPAGSRKVVIATNIAETSLTIDGIFYVVDPGFVKQKVYNSKTGMDSLVVTPISQAAAKQRAGRAGRTGPGKTYRLYTERAYRDEMLPTPVPEIQRTNLATTVLQLKTMGINDLLHFDFMDAPPVESLVMALEQLHSLSALDDEGLLTRLGRRMAEFPLEPNLSKMLIMSVALQCSDEILTIVSMLSVQNVFYRPKDKQALADQKKAKFNQAEGDHLTLLAVYNSWKNNKFSNAWCYENFVQIRTLKRSQDVRKQLLGIMDRHKLDVVSAGKNSVRIQKAICSGFFRNAAKKDPQEGYRTLVDSQVVYIHPSSALFNRQPEWVIYHELVQTTKEYMREVTTIDPKWLVEFAPSFFRFSDPTKLSKFKKNQRLEPLYNKYEEPNAWRISRVRRRRN.

Disordered regions lie at residues 75 to 283 (RPSR…DDPE) and 354 to 449 (SMKE…GLLP). Basic and acidic residues-rich tracts occupy residues 87 to 97 (TVGDKKEDKKS), 113 to 141 (YSKK…KTDM), and 180 to 196 (RDRD…DRHS). 2 stretches are compositionally biased toward basic residues: residues 197–222 (DRRR…RRSR) and 232–252 (DRRH…RSRS). Over residues 253-269 (RSTERRDRRDRSRDCSE) the composition is skewed to basic and acidic residues. Positions 285–356 (GKIYSGKIAN…TGQKVSLSMK (72 aa)) constitute an S1 motif domain. Over residues 388–399 (FSSSTSMLNLQG) the composition is skewed to polar residues. A compositionally biased stretch (acidic residues) spans 439–449 (PDFDEETGLLP). One can recognise a Helicase ATP-binding domain in the interval 596 to 759 (IKAVTDNQIL…FFKAPIFTIP (164 aa)). 609–616 (GETGSGKT) is a binding site for ATP. The short motif at 706-709 (DEAH) is the DEAH box element. The Helicase C-terminal domain occupies 777–957 (YLDASLITVM…TTVLQLKTMG (181 aa)).

It belongs to the DEAD box helicase family. DEAH subfamily. DDX8/PRP22 sub-subfamily. Identified in the spliceosome C complex.

It localises to the nucleus. It carries out the reaction ATP + H2O = ADP + phosphate + H(+). Its function is as follows. Involved in pre-mRNA splicing as component of the spliceosome. Facilitates nuclear export of spliced mRNA by releasing the RNA from the spliceosome. Before and after egg-chamber formation, required for nurse-cell chromatin dispersal (NCCD) probably by playing a role in spliceosome localization to chromatin/interchromatin spaces. This is ATP-dependent RNA helicase DHX8 from Drosophila melanogaster (Fruit fly).